Reading from the N-terminus, the 68-residue chain is MARITTEDCTGKISNHFDLTLVAARRARQLENGNTPLVDDVRNNKPTVTALREIAAGHIGTELLTRNK.

The protein belongs to the RNA polymerase subunit omega family. As to quaternary structure, the RNAP catalytic core consists of 2 alpha, 1 beta, 1 beta' and 1 omega subunit. When a sigma factor is associated with the core the holoenzyme is formed, which can initiate transcription.

It carries out the reaction RNA(n) + a ribonucleoside 5'-triphosphate = RNA(n+1) + diphosphate. Its function is as follows. Promotes RNA polymerase assembly. Latches the N- and C-terminal regions of the beta' subunit thereby facilitating its interaction with the beta and alpha subunits. This is DNA-directed RNA polymerase subunit omega from Neisseria gonorrhoeae (strain NCCP11945).